The primary structure comprises 265 residues: MVLSRLAASGLLLLALLALSVDGKPVQQWAQGGWPRPGPEIPPLKVQQWAQGGWPRPGPEIPPLTVQQWAQNWPHPQIPPLTVQQWAQLGPPPRPQIPPLEVQQWAQGRAPHPPIPPAPLQKWAPVQKWAPLLQPHESPASGTTALREELSLGPEAASGVPSAGAEVGRSGSKAPAAPHRLSKSKGAAATSAASRPMRDLRPDGKQARQNWGRMVHHDHHAAVGGGGGGGGGGARRLKGLAKKGAAKGCFGLKLDRIGTMSGLGC.

The signal sequence occupies residues Met-1–Gly-23. Residues Lys-24–Ala-30 constitute a propeptide that is removed on maturation. The residue at position 31 (Gln-31) is a Pyrrolidone carboxylic acid. Positions Leu-44–Ala-50 are excised as a propeptide. Gln-51 bears the Pyrrolidone carboxylic acid mark. Positions Leu-64 to Ala-70 are excised as a propeptide. Position 71 is a pyrrolidone carboxylic acid (Gln-71). The propeptide occupies Leu-81–Ala-87. Residue Gln-88 is modified to Pyrrolidone carboxylic acid. The propeptide occupies Leu-100–Ala-106. Gln-107 bears the Pyrrolidone carboxylic acid mark. Positions Ala-118–Leu-120 are excised as a propeptide. Gln-121 carries the post-translational modification Pyrrolidone carboxylic acid. A propeptide is located at residue Val-126. Gln-127 bears the Pyrrolidone carboxylic acid mark. The propeptide occupies Leu-132–Ala-241. Residues Gly-153–Trp-211 are disordered. Residues Ser-184 to Ser-194 are compositionally biased toward low complexity. Residues Pro-196–Gln-206 are compositionally biased toward basic and acidic residues. A disulfide bridge links Cys-249 with Cys-265.

In the N-terminal section; belongs to the bradykinin-potentiating peptide family. This sequence in the C-terminal section; belongs to the natriuretic peptide family. As to expression, expressed by the venom gland.

Its subcellular location is the secreted. It is found in the cytoplasm. It localises to the cytosol. Functionally, modestly inhibits ACE (with highest affinity for the N-site) and reveals strong bradykinin-potentiating activity. Induces nitric oxide (NO) production depended on muscarinic acetylcholine receptor M1 subtype (CHRM1) and bradykinin B2 receptor (BDKRB2) activation. Both these receptors contribute to the vasodilation induced by this peptide that may have an indirect action on BDKRB2 and a direct agonistic action on CHRM1. Peptide with several activities. It inhibits the activity of the angiotensin-converting enzyme (ACE) by a preferential interaction with its C-domain. It evokes transient hypotension (-14 mmHg) similar to that evoked by 0.5 ug of bradykinin, when injected alone into rats. It has a high bradykinin-potentiating effect (120%), when 60 nmol of BPP-10c are coinjected with 0.5 ug of bradykinin into rats. Does not affect angiotensin-1 pressor effects. Shows potent and long-lasting antihypertensive activity as well as a reduction of the heart rate. It also binds and dose-dependently promotes the activation of cytosolic argininosuccinate synthase (ASS1), an enzyme that catalyzes the conversion of citrulline, L-aspartate and ATP to argininosuccinate, AMP and pyrophosphate. It also enhances ASS1-dependent arginine production in HEK 293 cells, as well as in spontaneous hypertensive rat (SHR) and Wistar rat plasma. In addition, it induces the production of nitric-oxide (NO) by HUVEC cells via the endothelial nitric-oxide synthase (NOS3), which use arginine as a substrate and produce NO. It has been shown to be internalized by ASS1-expressing endothelial (HUVEC) and kidney (HEK 293) cells, and is detected homogenously distributed within the cell cytoplasm for up to 2 hours. Its function is as follows. has a vasorelaxant activity in rat aortic strips and a diuretic potency in anesthetized rats. May act by activating natriuretic receptors (NPR1 and/or NPR2). This Bothrops insularis (Golden lancehead) protein is Bradykinin-potentiating and C-type natriuretic peptides.